We begin with the raw amino-acid sequence, 123 residues long: Small ribosomal subunit protein uS13 (123 aa).

Residues 89–123 (GRRHRSGLPVRGQRTRTNARTRKGKRKAVAKKKAK) form a disordered region. Basic residues predominate over residues 101 to 123 (QRTRTNARTRKGKRKAVAKKKAK).

It belongs to the universal ribosomal protein uS13 family. Part of the 30S ribosomal subunit. Forms a loose heterodimer with protein S19. Forms two bridges to the 50S subunit in the 70S ribosome.

Functionally, located at the top of the head of the 30S subunit, it contacts several helices of the 16S rRNA. In the 70S ribosome it contacts the 23S rRNA (bridge B1a) and protein L5 of the 50S subunit (bridge B1b), connecting the 2 subunits; these bridges are implicated in subunit movement. Contacts the tRNAs in the A and P-sites. The protein is Small ribosomal subunit protein uS13 of Cutibacterium acnes (strain DSM 16379 / KPA171202) (Propionibacterium acnes).